Here is a 417-residue protein sequence, read N- to C-terminus: NADH-quinone oxidoreductase subunit D (417 aa).

The protein belongs to the complex I 49 kDa subunit family. In terms of assembly, NDH-1 is composed of 14 different subunits. Subunits NuoB, C, D, E, F, and G constitute the peripheral sector of the complex.

Its subcellular location is the cell inner membrane. It carries out the reaction a quinone + NADH + 5 H(+)(in) = a quinol + NAD(+) + 4 H(+)(out). NDH-1 shuttles electrons from NADH, via FMN and iron-sulfur (Fe-S) centers, to quinones in the respiratory chain. The immediate electron acceptor for the enzyme in this species is believed to be ubiquinone. Couples the redox reaction to proton translocation (for every two electrons transferred, four hydrogen ions are translocated across the cytoplasmic membrane), and thus conserves the redox energy in a proton gradient. The protein is NADH-quinone oxidoreductase subunit D of Acidovorax sp. (strain JS42).